A 323-amino-acid chain; its full sequence is Chitinase 1 (323 aa).

The N-terminal stretch at 1–20 (MRALAVVVVATAFAVVAVRG) is a signal peptide. Residues 21 to 61 (EQCGSQAGGALCPNCLCCSQYGWCGSTSAYCGSGCQSQCSG) form the Chitin-binding type-1 domain. 8 disulfide bridges follow: C23–C38, C32–C44, C35–C63, C37–C51, C55–C59, C100–C162, C176–C184, and C283–C315. E144 functions as the Proton donor in the catalytic mechanism.

This sequence belongs to the glycosyl hydrolase 19 family. Chitinase class I subfamily. Expressed in roots, leaves, sheaths and meristems.

The catalysed reaction is Random endo-hydrolysis of N-acetyl-beta-D-glucosaminide (1-&gt;4)-beta-linkages in chitin and chitodextrins.. In terms of biological role, hydrolyzes chitin and may play a role in defense against fungal pathogens containing chitin. The protein is Chitinase 1 (Cht1) of Oryza sativa subsp. japonica (Rice).